The primary structure comprises 1196 residues: [NU+] prion formation protein 1 (1196 aa).

Disordered regions lie at residues 1-49 and 103-125; these read MPPK…KSSY and TYKQSAVTPNQSGTPTPSASTTS. Polar residues-rich tracts occupy residues 39–49 and 103–113; these read GSNNASKKSSY and TYKQSAVTPNQ. The segment covering 114 to 125 has biased composition (low complexity); it reads SGTPTPSASTTS. Residue S443 is modified to Phosphoserine. ABC transporter domains lie at 570 to 786 and 812 to 1129; these read IEIV…YYTL and AKMT…ADAV. ATP contacts are provided by residues 604–611 and 846–853; these read GRNGAGKS and GPNGAGKS. The region spanning 942-1003 is the Chromo domain; it reads RAIEAIVGRQ…HEASREGLGY (62 aa). Disordered stretches follow at residues 1137 to 1166 and 1177 to 1196; these read AKPSVDDDDSPANIKVKQRKKRLTRNEKKL and EWLSSPKGTPKPVDTDDEED. At T1191 the chain carries Phosphothreonine.

This sequence belongs to the ABC transporter superfamily. ABCF family. EF3 subfamily.

The protein localises to the cytoplasm. The protein resides in the nucleus. Functionally, may be involved in the mRNA export process. Forms the [NU+] prion and induces [PSI+] prion formation. This Saccharomyces cerevisiae (strain ATCC 204508 / S288c) (Baker's yeast) protein is [NU+] prion formation protein 1 (NEW1).